The chain runs to 367 residues: Phosphoribosylaminoimidazole-succinocarboxamide synthase (367 aa).

The protein belongs to the SAICAR synthetase family.

The catalysed reaction is 5-amino-1-(5-phospho-D-ribosyl)imidazole-4-carboxylate + L-aspartate + ATP = (2S)-2-[5-amino-1-(5-phospho-beta-D-ribosyl)imidazole-4-carboxamido]succinate + ADP + phosphate + 2 H(+). The protein operates within purine metabolism; IMP biosynthesis via de novo pathway; 5-amino-1-(5-phospho-D-ribosyl)imidazole-4-carboxamide from 5-amino-1-(5-phospho-D-ribosyl)imidazole-4-carboxylate: step 1/2. This chain is Phosphoribosylaminoimidazole-succinocarboxamide synthase, found in Shewanella baltica (strain OS155 / ATCC BAA-1091).